The following is a 614-amino-acid chain: Numb-like protein (614 aa).

5 disordered regions span residues 1–68, 223–283, 371–420, 448–468, and 539–614; these read MSRS…QWQA, GSFR…PVAA, FASA…LEEV, QQQQ…LQPF, and LGKA…EIEL. In terms of domain architecture, PID spans 74-223; sequence RKGTCSFPVR…ASRTSFAREG (150 aa). Ser224 and Ser228 each carry phosphoserine. The span at 233-245 shows a compositional bias: basic and acidic residues; sequence PAEREAGDKKKAE. A compositionally biased stretch (low complexity) spans 246 to 260; sequence AAAAPAVAPGPAQPG. Ser263 is subject to Phosphoserine. Position 279 is a phosphothreonine (Thr279). Low complexity predominate over residues 371 to 390; that stretch reads FASAGAPVPGPPSATTGTSA. Positions 409-418 are enriched in basic and acidic residues; sequence TPSEAERWLE. A Phosphoserine modification is found at Ser411. The span at 563 to 578 shows a compositional bias: pro residues; sequence NGAPWPPEPAPAPAPE.

Associates with EPS15 and NOTCH1. Interacts (via PTB domain) with MAP3K7IP2 (via C-terminal). Interacts (via C-terminal) with TRAF6 (via TRAF domains).

The protein localises to the cytoplasm. Its function is as follows. Plays a role in the process of neurogenesis. Required throughout embryonic neurogenesis to maintain neural progenitor cells, also called radial glial cells (RGCs), by allowing their daughter cells to choose progenitor over neuronal cell fate. Not required for the proliferation of neural progenitor cells before the onset of embryonic neurogenesis. Also required postnatally in the subventricular zone (SVZ) neurogenesis by regulating SVZ neuroblasts survival and ependymal wall integrity. Negative regulator of NF-kappa-B signaling pathway. The inhibition of NF-kappa-B activation is mediated at least in part, by preventing MAP3K7IP2 to interact with polyubiquitin chains of TRAF6 and RIPK1 and by stimulating the 'Lys-48'-linked polyubiquitination and degradation of TRAF6 in cortical neurons. The protein is Numb-like protein (Numbl) of Rattus norvegicus (Rat).